The chain runs to 523 residues: UDP-N-acetylmuramyl-tripeptide synthetase (523 aa).

Serine 38 provides a ligand contact to UDP-N-acetyl-alpha-D-muramoyl-L-alanyl-D-glutamate. 116 to 122 (GTKGKTT) is a binding site for ATP. UDP-N-acetyl-alpha-D-muramoyl-L-alanyl-D-glutamate-binding positions include 162–163 (TT), serine 189, and arginine 197. Lysine 231 bears the N6-carboxylysine mark.

This sequence belongs to the MurCDEF family. MurE subfamily. Post-translationally, carboxylation is probably crucial for Mg(2+) binding and, consequently, for the gamma-phosphate positioning of ATP.

The protein resides in the cytoplasm. The protein operates within cell wall biogenesis; peptidoglycan biosynthesis. Its function is as follows. Catalyzes the addition of an amino acid to the nucleotide precursor UDP-N-acetylmuramoyl-L-alanyl-D-glutamate (UMAG) in the biosynthesis of bacterial cell-wall peptidoglycan. The sequence is that of UDP-N-acetylmuramyl-tripeptide synthetase from Lactobacillus acidophilus (strain ATCC 700396 / NCK56 / N2 / NCFM).